A 572-amino-acid polypeptide reads, in one-letter code: SHUGOSHIN 1 (572 aa).

Residues 59 to 110 (KHQQQAILISSKENAENLQKENTKLMKVVMERDGIKSDLKKLRIEFQKVQEQ) adopt a coiled-coil conformation. Disordered stretches follow at residues 185-221 (DADH…PANS), 244-285 (KLVS…QTET), 333-352 (ARLK…SIET), and 484-572 (SRRQ…RGGF). Over residues 192–201 (SGSSNANSLQ) the composition is skewed to polar residues. Composition is skewed to basic and acidic residues over residues 244-257 (KLVS…ENHI), 336-352 (KSQE…SIET), 523-542 (ELKR…EMRK), and 552-572 (AAEK…RGGF).

The protein belongs to the shugoshin family.

Functionally, protects sister chromatid centromere cohesion in meiosis I but not through the protection of the cohesin SYN1. Required with SGO2 for full protection of centromeric cohesion during anaphase I. Required to prevent precocious release of pericentromeric cohesins during meiosis. Not necessary for the maintenance of the synaptonemal complex (SC). Not required for monopolar spindle orientation in meiosis I. The sequence is that of SHUGOSHIN 1 from Arabidopsis thaliana (Mouse-ear cress).